The sequence spans 415 residues: Palmitoyl-acyl carrier protein thioesterase, chloroplastic (415 aa).

Low complexity-rich tracts occupy residues 1–16 and 24–41; these read MVAT…LPSA and KLGN…KSTP. Residues 1-60 constitute a chloroplast transit peptide; the sequence is MVATAASSAFFPLPSADTSSRPGKLGNKPSSLSPLKPKSTPNGGLQVKANASAPPKINGS. Residues 1–81 are disordered; it reads MVATAASSAF…QEDAHSAPPP (81 aa). Catalysis depends on residues N314, H316, and C351.

The protein belongs to the acyl-ACP thioesterase family.

Its subcellular location is the plastid. The protein resides in the chloroplast. The enzyme catalyses hexadecanoyl-[ACP] + H2O = hexadecanoate + holo-[ACP] + H(+). Plays an essential role in chain termination during de novo fatty acid synthesis. High thioesterase activity for palmitoyl-ACP versus other acyl-ACPs. The protein is Palmitoyl-acyl carrier protein thioesterase, chloroplastic (FATB1) of Cuphea hookeriana (Cigar plant).